The primary structure comprises 359 residues: Peroxisome assembly protein 12 (359 aa).

Topologically, residues 1–19 (MAEHGAHFTAASVADDQPS) are peroxisomal matrix. The helical transmembrane segment at 20–47 (IFEVVAQDSLMTAVRPALQHVVKVLAES) threads the bilayer. The Cytoplasmic segment spans residues 48 to 51 (NPTH). The chain crosses the membrane as a helical span at residues 52-76 (YGFLWRWFDEIFTLLDLLLQQHYLS). Over 77–109 (RTSASFSENFYGLKRIVMGDTHKSQRLASAGLP) the chain is Peroxisomal matrix. The helical transmembrane segment at 110-139 (KQQLWKSIMFLVLLPYLKVKLEKLVSSLRE) threads the bilayer. The Cytoplasmic segment spans residues 140–144 (EDEYS). A helical transmembrane segment spans residues 145-183 (IHPPSSRWKRFYRAFLAAYPFVNMAWEGWFLVQQLRYIL). Over 184-249 (GKAQHHSPLL…VGGVALSLST (66 aa)) the chain is Peroxisomal matrix. The helical transmembrane segment at 250-277 (GLSVGVFFLQFLDWWYSSENQETIKSLT) threads the bilayer. The Cytoplasmic portion of the chain corresponds to 278 to 359 (ALPTPPPPVH…HLIKLYSPEN (82 aa)). Zn(2+) is bound by residues C304, C307, C325, and C328. Residues 304–343 (CPLCRKTRVNDTVLATSGYVFCYRCVFHYVRSHQACPITG) form an RING-type; degenerate zinc finger.

The protein belongs to the pex2/pex10/pex12 family. As to quaternary structure, component of the PEX2-PEX10-PEX12 retrotranslocation channel, composed of PEX2, PEX10 and PEX12. Interacts with PEX19 via its cytoplasmic domain.

The protein resides in the peroxisome membrane. The protein operates within protein modification; protein ubiquitination. Component of a retrotranslocation channel required for peroxisome organization by mediating export of the PEX5 receptor from peroxisomes to the cytosol, thereby promoting PEX5 recycling. The retrotranslocation channel is composed of PEX2, PEX10 and PEX12; each subunit contributing transmembrane segments that coassemble into an open channel that specifically allows the passage of PEX5 through the peroxisomal membrane. PEX12 also regulates PEX5 recycling by activating the E3 ubiquitin-protein ligase activity of PEX10. When PEX5 recycling is compromised, PEX12 stimulates PEX10-mediated polyubiquitination of PEX5, leading to its subsequent degradation. In Homo sapiens (Human), this protein is Peroxisome assembly protein 12.